The sequence spans 466 residues: 3-isopropylmalate dehydratase large subunit (466 aa).

Residues Cys-347, Cys-407, and Cys-410 each coordinate [4Fe-4S] cluster.

Belongs to the aconitase/IPM isomerase family. LeuC type 1 subfamily. As to quaternary structure, heterodimer of LeuC and LeuD. The cofactor is [4Fe-4S] cluster.

It catalyses the reaction (2R,3S)-3-isopropylmalate = (2S)-2-isopropylmalate. It participates in amino-acid biosynthesis; L-leucine biosynthesis; L-leucine from 3-methyl-2-oxobutanoate: step 2/4. Functionally, catalyzes the isomerization between 2-isopropylmalate and 3-isopropylmalate, via the formation of 2-isopropylmaleate. This Blochmanniella floridana protein is 3-isopropylmalate dehydratase large subunit.